Reading from the N-terminus, the 1115-residue chain is Carbamoyl phosphate synthase large chain (1115 aa).

Residues 1–407 (MPRRTDLHHV…ALGKVMRSLE (407 aa)) are carboxyphosphate synthetic domain. ATP-binding residues include R134, R174, G180, G181, E213, I215, E220, G246, V247, H248, Q290, and E304. Residues 138–333 (KDIVAKAGGE…IAKIAAKLAI (196 aa)) enclose the ATP-grasp 1 domain. Residues Q290, E304, and N306 each coordinate Mg(2+). Residues Q290, E304, and N306 each coordinate Mn(2+). Residues 408-559 (TTRAGFWTAP…ELDPAAETEV (152 aa)) are oligomerization domain. The tract at residues 560 to 965 (APQTERPKVL…AFAKSQTAAY (406 aa)) is carbamoyl phosphate synthetic domain. One can recognise an ATP-grasp 2 domain in the interval 693–884 (GDLLSAAGLP…LAKACARIML (192 aa)). ATP contacts are provided by R729, R768, L770, E775, G800, I801, H802, S803, Q843, and E855. Mg(2+)-binding residues include Q843, E855, and N857. Mn(2+)-binding residues include Q843, E855, and N857. The region spanning 966–1113 (GSLPAQGTVF…QELHRVIGGV (148 aa)) is the MGS-like domain. Residues 966 to 1115 (GSLPAQGTVF…LHRVIGGVER (150 aa)) form an allosteric domain region.

Belongs to the CarB family. In terms of assembly, composed of two chains; the small (or glutamine) chain promotes the hydrolysis of glutamine to ammonia, which is used by the large (or ammonia) chain to synthesize carbamoyl phosphate. Tetramer of heterodimers (alpha,beta)4. Requires Mg(2+) as cofactor. It depends on Mn(2+) as a cofactor.

The enzyme catalyses hydrogencarbonate + L-glutamine + 2 ATP + H2O = carbamoyl phosphate + L-glutamate + 2 ADP + phosphate + 2 H(+). It carries out the reaction hydrogencarbonate + NH4(+) + 2 ATP = carbamoyl phosphate + 2 ADP + phosphate + 2 H(+). It participates in amino-acid biosynthesis; L-arginine biosynthesis; carbamoyl phosphate from bicarbonate: step 1/1. Its pathway is pyrimidine metabolism; UMP biosynthesis via de novo pathway; (S)-dihydroorotate from bicarbonate: step 1/3. Its function is as follows. Large subunit of the glutamine-dependent carbamoyl phosphate synthetase (CPSase). CPSase catalyzes the formation of carbamoyl phosphate from the ammonia moiety of glutamine, carbonate, and phosphate donated by ATP, constituting the first step of 2 biosynthetic pathways, one leading to arginine and/or urea and the other to pyrimidine nucleotides. The large subunit (synthetase) binds the substrates ammonia (free or transferred from glutamine from the small subunit), hydrogencarbonate and ATP and carries out an ATP-coupled ligase reaction, activating hydrogencarbonate by forming carboxy phosphate which reacts with ammonia to form carbamoyl phosphate. This is Carbamoyl phosphate synthase large chain from Mycobacterium tuberculosis (strain CDC 1551 / Oshkosh).